The primary structure comprises 294 residues: tRNA pseudouridine synthase B (294 aa).

Asp-38 functions as the Nucleophile in the catalytic mechanism.

Belongs to the pseudouridine synthase TruB family. Type 1 subfamily.

It catalyses the reaction uridine(55) in tRNA = pseudouridine(55) in tRNA. In terms of biological role, responsible for synthesis of pseudouridine from uracil-55 in the psi GC loop of transfer RNAs. The protein is tRNA pseudouridine synthase B of Clostridium perfringens (strain 13 / Type A).